We begin with the raw amino-acid sequence, 276 residues long: CTD small phosphatase-like protein (276 aa).

The interval 1–25 is disordered; the sequence is MDGPAIITQVTNPKEDEGRLPGAGE. One can recognise an FCP1 homology domain in the interval 102 to 260; that stretch reads LDYGKKCVVI…LDLIPFFEGL (159 aa). Aspartate 112 serves as the catalytic 4-aspartylphosphate intermediate. Positions 112, 114, and 223 each coordinate Mg(2+). Residue aspartate 114 is the Proton donor of the active site.

Interacts with REST. Monomer. Mg(2+) is required as a cofactor. Expression is restricted to non-neuronal tissues.

The protein resides in the nucleus. It carries out the reaction O-phospho-L-seryl-[protein] + H2O = L-seryl-[protein] + phosphate. The enzyme catalyses O-phospho-L-threonyl-[protein] + H2O = L-threonyl-[protein] + phosphate. Its function is as follows. Recruited by REST to neuronal genes that contain RE-1 elements, leading to neuronal gene silencing in non-neuronal cells. Preferentially catalyzes the dephosphorylation of 'Ser-5' within the tandem 7 residue repeats in the C-terminal domain (CTD) of the largest RNA polymerase II subunit POLR2A. Negatively regulates RNA polymerase II transcription, possibly by controlling the transition from initiation/capping to processive transcript elongation. This Homo sapiens (Human) protein is CTD small phosphatase-like protein (CTDSPL).